The following is a 344-amino-acid chain: Phosphoribosylformylglycinamidine cyclo-ligase (344 aa).

Belongs to the AIR synthase family.

It is found in the cytoplasm. The catalysed reaction is 2-formamido-N(1)-(5-O-phospho-beta-D-ribosyl)acetamidine + ATP = 5-amino-1-(5-phospho-beta-D-ribosyl)imidazole + ADP + phosphate + H(+). The protein operates within purine metabolism; IMP biosynthesis via de novo pathway; 5-amino-1-(5-phospho-D-ribosyl)imidazole from N(2)-formyl-N(1)-(5-phospho-D-ribosyl)glycinamide: step 2/2. The protein is Phosphoribosylformylglycinamidine cyclo-ligase of Exiguobacterium sp. (strain ATCC BAA-1283 / AT1b).